Consider the following 635-residue polypeptide: Phosphatidylserine decarboxylase proenzyme 3 (635 aa).

The interval 1 to 42 (MGNGNSTETKESRRSKMRKKIQNFRSRRRLSRPGSGSVSGLA) is disordered. Gly-2 is lipidated: N-myristoyl glycine. The span at 15–31 (SKMRKKIQNFRSRRRLS) shows a compositional bias: basic residues. A C2 domain is found at 22 to 147 (QNFRSRRRLS…VVQEPDSTCK (126 aa)). EF-hand domains lie at 180–210 (AKRI…FGNV) and 211–246 (VAAN…QQEQ). Residues Asp-188, Asp-190, Asp-192, Lys-194, Glu-199, Asp-224, Asn-226, Asp-228, and Glu-235 each contribute to the Ca(2+) site. Catalysis depends on charge relay system; for autoendoproteolytic cleavage activity residues Asp-442, His-498, and Ser-586. Residue Ser-586 is the Schiff-base intermediate with substrate; via pyruvic acid; for decarboxylase activity of the active site. The residue at position 586 (Ser-586) is a Pyruvic acid (Ser); by autocatalysis.

It belongs to the phosphatidylserine decarboxylase family. PSD-B subfamily. Eukaryotic type II sub-subfamily. In terms of assembly, heterodimer of a large membrane-associated beta subunit and a small pyruvoyl-containing alpha subunit. The cofactor is pyruvate. Is synthesized initially as an inactive proenzyme. Formation of the active enzyme involves a self-maturation process in which the active site pyruvoyl group is generated from an internal serine residue via an autocatalytic post-translational modification. Two non-identical subunits are generated from the proenzyme in this reaction, and the pyruvate is formed at the N-terminus of the alpha chain, which is derived from the carboxyl end of the proenzyme. The autoendoproteolytic cleavage occurs by a canonical serine protease mechanism, in which the side chain hydroxyl group of the serine supplies its oxygen atom to form the C-terminus of the beta chain, while the remainder of the serine residue undergoes an oxidative deamination to produce ammonia and the pyruvoyl prosthetic group on the alpha chain. During this reaction, the Ser that is part of the protease active site of the proenzyme becomes the pyruvoyl prosthetic group, which constitutes an essential element of the active site of the mature decarboxylase. In terms of tissue distribution, expressed in roots, leaves, stems and flowers.

It localises to the endoplasmic reticulum membrane. It catalyses the reaction a 1,2-diacyl-sn-glycero-3-phospho-L-serine + H(+) = a 1,2-diacyl-sn-glycero-3-phosphoethanolamine + CO2. It participates in phospholipid metabolism; phosphatidylethanolamine biosynthesis; phosphatidylethanolamine from CDP-diacylglycerol: step 2/2. Its function is as follows. Catalyzes the formation of phosphatidylethanolamine (PtdEtn) from phosphatidylserine (PtdSer). Plays a central role in phospholipid metabolism and in the interorganelle trafficking of phosphatidylserine. Contributes only to a minor proportion of PtdEtn production. The sequence is that of Phosphatidylserine decarboxylase proenzyme 3 (PSD3) from Arabidopsis thaliana (Mouse-ear cress).